The primary structure comprises 635 residues: Cell pattern formation-associated protein stuA (635 aa).

Disordered regions lie at residues 1-21 (MNQTQPYMDVHSSHLSSAQPY) and 63-82 (SGVASSQTAPPPPSTSMSSQ). One can recognise an HTH APSES-type domain in the interval 129-235 (RVTATLWEDE…HNIGGLLYHP (107 aa)). A DNA-binding region (H-T-H motif) is located at residues 163 to 184 (GTKLLNVAGMTRGRRDGILKSE). Disordered stretches follow at residues 246–480 (QESQ…ASRS) and 498–635 (SQLT…PRRR). Low complexity-rich tracts occupy residues 276-294 (MQTSIPSQMPQPPTMSSQP) and 312-325 (SASSLMGLSNQSSS). Residues 326-355 (YDWNNQGMNSGVPNTQPLSIDTTLSNTRSM) are compositionally biased toward polar residues. The span at 356–380 (PTTPATTPPGNNLQGMQSYQSQSGY) shows a compositional bias: low complexity. The span at 460-469 (APEHESEYVQ) shows a compositional bias: basic and acidic residues. Composition is skewed to polar residues over residues 498–513 (SQLTNDITGSPQQNGS) and 539–571 (AASSLYNIVSDTRGSSNGAGSENYTVASNTAPT). The segment at 582–605 (KRGREDDDMGRPDSQGDYESKRRR) is nuclear localization domain. Positions 583-592 (RGREDDDMGR) are enriched in basic and acidic residues.

Belongs to the EFG1/PHD1/stuA family.

Transcription factor that regulates asexual reproduction. Binds the StuA-response elements (StRE) with the consensus sequence 5'-(A/T)CGCG(T/A)N(A/C)-3' at the promoters of target genes. Controls the expression of 6 secondary metabolite biosynthetic clusters including 2 involved in the synthesis of alkaloids (fumigaclavine and fumitremorgen), 2 clusters of the ETP class (gliotoxin and an unknown ETP-like toxin), a cluster predicted to produce pseurotin A, and the product of the last cluster is unknown. Controls the production of ergot alkaloids during conidiophore development. Controls expression of sspA and gliP. Involved in the induction of immunoglobulin E-independent mast cell degranulation. This Aspergillus fumigatus (strain ATCC MYA-4609 / CBS 101355 / FGSC A1100 / Af293) (Neosartorya fumigata) protein is Cell pattern formation-associated protein stuA.